The chain runs to 180 residues: Putative peroxiredoxin YkuU (180 aa).

A Thioredoxin domain is found at 4–165 (RMVGKQAPRF…TLRVLQALQT (162 aa)). The active-site Cysteine sulfenic acid (-SOH) intermediate is the cysteine 52.

It belongs to the peroxiredoxin family. AhpC/Prx1 subfamily. Homodimer; disulfide-linked, upon oxidation.

Its subcellular location is the cytoplasm. The catalysed reaction is a hydroperoxide + [protein]-dithiol = [protein]-disulfide + an alcohol + H2O. Functionally, thiol-specific peroxidase that catalyzes the reduction of hydrogen peroxide and organic hydroperoxides to water and alcohols, respectively. Plays a role in cell protection against oxidative stress by detoxifying peroxides. The protein is Putative peroxiredoxin YkuU (ykuU) of Bacillus subtilis (strain 168).